Consider the following 840-residue polypeptide: Phosphatidylglycerol lysyltransferase (840 aa).

Residues 1–8 (MNQEVKNK) are Cytoplasmic-facing. The chain crosses the membrane as a helical span at residues 9-29 (IFSILKITFATALFIFVAITL). The Extracellular portion of the chain corresponds to 30–52 (YRELSGINFKDTLVEFSKINRMS). The helical transmembrane segment at 53–73 (LVLLFIGGGASLVILSMYDVI) threads the bilayer. The Cytoplasmic portion of the chain corresponds to 74 to 89 (LSRALKMDISLGKVLR). The helical transmembrane segment at 90–110 (VSYIINALNAIVGFGGFIGAG) threads the bilayer. Topologically, residues 111-128 (VRAMVYKNYTHDKKKLVH) are extracellular. A helical membrane pass occupies residues 129–149 (FISLILISMLTGLSLLSLLIV). Residues 150-161 (FHVFDASLILDK) lie on the Cytoplasmic side of the membrane. A helical transmembrane segment spans residues 162 to 182 (ITWVRWVLYVVSFFLPLFIIY). The Extracellular segment spans residues 183–200 (SMVRPPDKNNRFVGLYCT). Residues 201–221 (LVSCVEWLAAAVVLYFCGVIV) traverse the membrane as a helical segment. The Cytoplasmic segment spans residues 222-229 (DAHVSFMS). A helical membrane pass occupies residues 230–250 (FIAIFIIAALSGLVSFIPGGF). Topologically, residues 251-271 (GAFDLVVLLGFKTLGVPEEKV) are extracellular. The helical transmembrane segment at 272–292 (LLMLLLYRFAYYFVPVIIALI) threads the bilayer. Residues 293-337 (LSSFEFGTSAKKYIEGSKYFIPAKDVTSFLMSYQKDIIAKIPSLS) are Cytoplasmic-facing. A helical membrane pass occupies residues 338–358 (LAILVFFTSMIFFVNNLTIVY). Residues 359–369 (DALYDGNHLTY) are Extracellular-facing. The chain crosses the membrane as a helical span at residues 370–390 (YILLAIHTSACLLLLLNVVGI). Over 391–394 (YKQS) the chain is Cytoplasmic. 2 helical membrane passes run 395 to 415 (RRAI…TFFT) and 416 to 436 (YASY…IVAF). The Cytoplasmic portion of the chain corresponds to 437–450 (RRARRLKRPVRMRN). The helical transmembrane segment at 451–471 (IVAMLLFSLFILYVNHIFIAG) threads the bilayer. At 472-489 (TLYALDIYTIEMHTSVLR) the chain is on the extracellular side. Residues 490–510 (YYFWLTILIIAIIIGMIAWLF) form a helical membrane-spanning segment. At 511 to 840 (DYQFSKVRIS…SKVMRVIRHK (330 aa)) the chain is on the cytoplasmic side.

It belongs to the LPG synthase family.

It localises to the cell membrane. It carries out the reaction L-lysyl-tRNA(Lys) + a 1,2-diacyl-sn-glycero-3-phospho-(1'-sn-glycerol) = a 1,2-diacyl-sn-glycero-3-phospho-1'-(3'-O-L-lysyl)-sn-glycerol + tRNA(Lys). Catalyzes the transfer of a lysyl group from L-lysyl-tRNA(Lys) to membrane-bound phosphatidylglycerol (PG), which produces lysylphosphatidylglycerol (LPG), a major component of the bacterial membrane with a positive net charge. LPG synthesis contributes to bacterial virulence as it is involved in the resistance mechanism against cationic antimicrobial peptides (CAMP) produces by the host's immune system (defensins, cathelicidins) and by the competing microorganisms (bacteriocins). In fact, the modification of anionic phosphatidylglycerol with positively charged L-lysine results in repulsion of the peptides. The sequence is that of Phosphatidylglycerol lysyltransferase (mprF) from Staphylococcus aureus (strain COL).